The following is a 180-amino-acid chain: MANRLKEKYLNEVVPALTEQFNYSSVMAVPKVDKIVLNMGVGEAVSNAKSLEKAAEELALISGQKPLITKAKKSIAGFRLREGVAIGAKVTLRGERMYEFLDKLVSVSLPRVRDFHGVPTKSFDGRGNYTLGVKEQLIFPEINFDDVDKTRGLDIVIVTTANTDEESRALLTGLGMPFAK.

Belongs to the universal ribosomal protein uL5 family. In terms of assembly, part of the 50S ribosomal subunit; part of the 5S rRNA/L5/L18/L25 subcomplex. Contacts the 5S rRNA and the P site tRNA. Forms a bridge to the 30S subunit in the 70S ribosome.

Functionally, this is one of the proteins that bind and probably mediate the attachment of the 5S RNA into the large ribosomal subunit, where it forms part of the central protuberance. In the 70S ribosome it contacts protein S13 of the 30S subunit (bridge B1b), connecting the 2 subunits; this bridge is implicated in subunit movement. Contacts the P site tRNA; the 5S rRNA and some of its associated proteins might help stabilize positioning of ribosome-bound tRNAs. The chain is Large ribosomal subunit protein uL5 from Streptococcus pneumoniae (strain JJA).